The primary structure comprises 399 residues: MLLEGVKVVELSSFIAAPCCAKMLGDWGAEVIKIEPIEGDGIRVMGGTFKSPASDDENPMFELENGNKKGVSINVKSKEGVEILHKLLSEADIFVTNVRVQALEKMGIAYDQIKDKYPGLIFSQILGYGEKGPLKDKPGFDYTAYFARGGVSQSVMEKGTSPANTAAGFGDHYAGLALAAGSLAALHKKAQTGKGERVTVSLFHTAIYGMGTMITTAQYGNEMPLSRENPNSPLMTTYKCKDGRWIQLALIQYNKWLGKFCKVINREYILEDDRYNNIDSMVNHVEDLVKIVGEAMLEKTLDEWSALLEEADLPFEKIQSCEDLLDDEQAWANDFLFKKTYDSGNTGVLVNTPVMFRNEGIKEYTPAPKVGQHTVEVLKSLGYDEEKINNFKDSKVVRY.

Asp-171 acts as the Nucleophile in catalysis.

This sequence belongs to the CoA-transferase III family. As to quaternary structure, homodimer.

The catalysed reaction is 4-methylpentanoyl-CoA + (2R)-hydroxy-4-methylpentanoate = (R)-2-hydroxy-4-methylpentanoyl-CoA + 4-methylpentanoate. It functions in the pathway amino-acid degradation; L-leucine degradation. Involved in the reductive branch of L-leucine fermentation. Catalyzes the transfer of the CoA moiety from 4-methylpentanoyl-CoA (isocaproyl-CoA) to (R)-2-hydroxy-4-methylpentanoate ((R)-2-hydroxyisocaproate), leading to the formation of (R)-2-hydroxy-4-methylpentanoyl-CoA. Other CoA thioesters, such as acetyl-CoA or butyryl-CoA, are not accepted as substrates. This is (R)-2-hydroxy-4-methylpentanoate CoA-transferase from Clostridioides difficile (Peptoclostridium difficile).